The chain runs to 128 residues: Early 4 ORF1 protein (128 aa).

The Cytoplasmic segment spans residues methionine 1–serine 26. The chain crosses the membrane as a helical span at residues glycine 27 to leucine 47. Residues serine 48–glutamine 99 are Extracellular-facing. A helical membrane pass occupies residues phenylalanine 100–proline 120. Over valine 121–valine 128 the chain is Cytoplasmic. A PBZ domain binding motif motif is present at residues alanine 125–valine 128.

Belongs to the adenoviridae E4-ORF1 family. In terms of assembly, may interact with host PDZ proteins through the PDZ domain binding motif (PBM), namely host DLG1, PATJ and TJP2.

It is found in the host membrane. Functionally, may modulate tight-junctions functions of infected cells through interactions with PDZ proteins. E4 ORF1 has ben show for Adenovirus 9 to interact with protein involved in tight junction regulation. May play a role in mTOR activation by activating PI3-kinase, thus overriding cellular checkpoint for translation. In Human adenovirus C serotype 2 (HAdV-2), this protein is Early 4 ORF1 protein.